A 297-amino-acid polypeptide reads, in one-letter code: Ribosomal protein L11 methyltransferase (297 aa).

S-adenosyl-L-methionine contacts are provided by Thr-152, Gly-173, Asp-195, and Asn-234.

This sequence belongs to the methyltransferase superfamily. PrmA family.

It is found in the cytoplasm. It carries out the reaction L-lysyl-[protein] + 3 S-adenosyl-L-methionine = N(6),N(6),N(6)-trimethyl-L-lysyl-[protein] + 3 S-adenosyl-L-homocysteine + 3 H(+). Its function is as follows. Methylates ribosomal protein L11. In Cupriavidus taiwanensis (strain DSM 17343 / BCRC 17206 / CCUG 44338 / CIP 107171 / LMG 19424 / R1) (Ralstonia taiwanensis (strain LMG 19424)), this protein is Ribosomal protein L11 methyltransferase.